We begin with the raw amino-acid sequence, 391 residues long: Formate-dependent phosphoribosylglycinamide formyltransferase (391 aa).

Residues 20 to 21 and E80 each bind N(1)-(5-phospho-beta-D-ribosyl)glycinamide; that span reads EL. Residues R112, K153, 158–163, 193–196, and E201 each bind ATP; these read SSGKGQ and EGFI. In terms of domain architecture, ATP-grasp spans 117 to 306; it reads RLAAEELDLS…EFALHVRAFT (190 aa). The Mg(2+) site is built by E265 and E277. N(1)-(5-phospho-beta-D-ribosyl)glycinamide-binding positions include D284, K354, and 361-362; that span reads RR.

The protein belongs to the PurK/PurT family. As to quaternary structure, homodimer.

It carries out the reaction N(1)-(5-phospho-beta-D-ribosyl)glycinamide + formate + ATP = N(2)-formyl-N(1)-(5-phospho-beta-D-ribosyl)glycinamide + ADP + phosphate + H(+). It functions in the pathway purine metabolism; IMP biosynthesis via de novo pathway; N(2)-formyl-N(1)-(5-phospho-D-ribosyl)glycinamide from N(1)-(5-phospho-D-ribosyl)glycinamide (formate route): step 1/1. Its function is as follows. Involved in the de novo purine biosynthesis. Catalyzes the transfer of formate to 5-phospho-ribosyl-glycinamide (GAR), producing 5-phospho-ribosyl-N-formylglycinamide (FGAR). Formate is provided by PurU via hydrolysis of 10-formyl-tetrahydrofolate. This Vibrio parahaemolyticus serotype O3:K6 (strain RIMD 2210633) protein is Formate-dependent phosphoribosylglycinamide formyltransferase.